Consider the following 793-residue polypeptide: E3 UFM1-protein ligase 1 (793 aa).

A2 is modified (N-acetylalanine). The interval 2-200 (ADAWEEIRRL…RGLFSAITRP (199 aa)) is mediates interaction with DDRGK1. The segment at 2–212 (ADAWEEIRRL…VNSLVSKYGF (211 aa)) is required for E3 UFM1-protein ligase activity. The segment at 121 to 250 (DRLSEEVNDK…KAVFVPDIYS (130 aa)) is involved in CDK5RAP3-binding. The segment at 200-400 (PTAVNSLVSK…NPVHLITEED (201 aa)) is mediates interaction with TRIP4. The interval 410–473 (VNTNKKDKKD…SSHAGKKKPD (64 aa)) is disordered. At R433 the chain carries Omega-N-methylarginine. Residues S458 and S462 each carry the phosphoserine modification. The interval 490 to 683 (IPDAPEEFIS…QLKVTEDPAL (194 aa)) is mediates interaction with CDK5RAP3. Phosphothreonine is present on T535. The segment at 742–769 (NKKSGQGEDPSSDDLDKEQHDVTNTTRK) is disordered. Residues S752 and S753 each carry the phosphoserine modification. The span at 758–769 (KEQHDVTNTTRK) shows a compositional bias: basic and acidic residues.

The protein belongs to the UFL1 family. In terms of assembly, catalytic component of the UFM1 ribosome E3 ligase (UREL) complex, composed of UFL1, DDRGK1 and CDK5RAP3. Interacts with E2-like enzyme UFC1. Interacts with RELA. Interacts with NBN; promoting recruitment to double-strand breaks following DNA damage. Interacts (when phosphorylated) with YWHAG/14-3-3-gamma; sequestering UFL1 and preventing its association with PDCD1/PD-1 substrate. In terms of processing, ubiquitinated, leading to its degradation by the proteasome. Interaction with CDK5RAP3 protects both proteins against ubiquitination and degradation via the proteasome. Phosphorylated at Ser-462 by ATM, enhancing protein ligase activity and promoting ATM activation in a positive feedback loop. Phosphorylation at Thr-535 by AMPK promotes its interaction with YWHAG/14-3-3-gamma, thereby preventing UFL1 association with PDCD1/PD-1 substrate. Ubiquitously expressed with expression detected in brain, skeletal muscle, lung, heart, gall bladder, liver, small intestine, pancreas, spleen and kidney (at protein level). At 8 weeks after birth, high expression in the Purkinje cell layer of the cerebellum.

The protein resides in the endoplasmic reticulum membrane. Its subcellular location is the cytoplasm. It localises to the cytosol. The protein localises to the nucleus. It is found in the chromosome. E3 protein ligase that mediates ufmylation, the covalent attachment of the ubiquitin-like modifier UFM1 to lysine residues on target proteins, and which plays a key role in various processes, such as ribosome recycling, response to DNA damage, interferon response or reticulophagy (also called ER-phagy). Catalyzes ufmylation of many protein, such as CD274/PD-L1, CDK5RAP3, CYB5R3, DDRGK1, EIF6, histone H4, MRE11, P4HB, PDCD1/PD-1, TRIP4, RPN1, RPS20/uS10, RPL10/uL16, RPL26/uL24, SYVN1/HRD1 and TP53/p53. As part of the UREL complex, plays a key role in ribosome recycling by catalyzing mono-ufmylation of RPL26/uL24 subunit of the 60S ribosome. Ufmylation of RPL26/uL24 occurs on free 60S ribosomes following ribosome dissociation: it weakens the junction between post-termination 60S subunits and SEC61 translocons, promoting release and recycling of the large ribosomal subunit from the endoplasmic reticulum membrane. Ufmylation of RPL26/uL24 and subsequent 60S ribosome recycling either take place after normal termination of translation or after ribosome stalling during cotranslational translocation at the endoplasmic reticulum. Involved in reticulophagy in response to endoplasmic reticulum stress by mediating ufmylation of proteins such as CYB5R3 and RPN1, thereby promoting lysosomal degradation of ufmylated proteins. Ufmylation in response to endoplasmic reticulum stress is essential for processes such as hematopoiesis, blood vessel morphogenesis or inflammatory response. Mediates ufmylation of DDRGK1 and CDK5RAP3; the role of these modifications is however unclear: as both DDRGK1 and CDK5RAP3 act as substrate adapters for ufmylation, it is uncertain whether ufmylation of these proteins is, a collateral effect or is required for ufmylation. Acts as a negative regulator of T-cell activation by mediating ufmylation and stabilization of PDCD1/PD-1. Also involved in the response to DNA damage: recruited to double-strand break sites following DNA damage and mediates monoufmylation of histone H4 and ufmylation of MRE11. Mediates ufmylation of TP53/p53, promoting its stability. Catalyzes ufmylation of TRIP4, thereby playing a role in nuclear receptor-mediated transcription. Required for hematopoietic stem cell function and hematopoiesis. The polypeptide is E3 UFM1-protein ligase 1 (Rattus norvegicus (Rat)).